Consider the following 245-residue polypeptide: MNLMNATPTEYVWKYNPVSGIPAGAQQNYGATIDWVLPGGTGFAIATNDIRRQTLNPAVTRAITARFEAESDQQPYASPHETNVIAANVLDSGYPKSGLYPLELSGNQRVQLAGGLMVGRTEGRMQLAGGLTEGRVQLSGGFHGRPLVRGRSRRPPRWCGAELTGNGLPEQAEVTSDTYKYFLRTQGPSQVVEEPGVFSQRQFMTTFLPSVVPHPFDSTNPGDFPAQYSAIYKGRTAFEDTFWDW.

Residues 116–167 constitute a propeptide that is removed on maturation; sequence LMVGRTEGRMQLAGGLTEGRVQLSGGFHGRPLVRGRSRRPPRWCGAELTGNG.

It belongs to the adenoviridae hexon-linking protein family. As to quaternary structure, interacts with the peripentonal hexons as well as the hexons in the facets. Part of a complex composed of the core-capsid bridging protein, the endosome lysis protein VI and the hexon-linking protein VIII; these interactions bridge the virus core to the capsid. In terms of processing, cleaved by the viral protease during virion maturation. May cause the middle segment to be shed from the capsid.

Its subcellular location is the virion. The protein localises to the host nucleus. Structural component of the virion that acts as a cement protein on the capsid interior and which glue the peripentonal hexons and group-of-nine hexons together. This chain is Pre-hexon-linking protein VIII, found in Galliformes (FAdV-1).